Reading from the N-terminus, the 473-residue chain is Siroheme synthase (473 aa).

Residues 1–222 (MNTQPHHSSP…GDESRADARL (222 aa)) form a precorrin-2 dehydrogenase /sirohydrochlorin ferrochelatase region. NAD(+) contacts are provided by residues 37–38 (EI) and 58–59 (EK). The tract at residues 233–473 (GEVWLVGAGP…QVVRHRVVSP (241 aa)) is uroporphyrinogen-III C-methyltransferase. Pro242 lines the S-adenosyl-L-methionine pocket. The active-site Proton acceptor is Asp265. Lys287 serves as the catalytic Proton donor. S-adenosyl-L-methionine is bound by residues 318–320 (GGD), Ile323, 348–349 (SA), Met401, and Gly430.

This sequence in the N-terminal section; belongs to the precorrin-2 dehydrogenase / sirohydrochlorin ferrochelatase family. It in the C-terminal section; belongs to the precorrin methyltransferase family.

The enzyme catalyses uroporphyrinogen III + 2 S-adenosyl-L-methionine = precorrin-2 + 2 S-adenosyl-L-homocysteine + H(+). It catalyses the reaction precorrin-2 + NAD(+) = sirohydrochlorin + NADH + 2 H(+). It carries out the reaction siroheme + 2 H(+) = sirohydrochlorin + Fe(2+). The protein operates within cofactor biosynthesis; adenosylcobalamin biosynthesis; precorrin-2 from uroporphyrinogen III: step 1/1. It participates in cofactor biosynthesis; adenosylcobalamin biosynthesis; sirohydrochlorin from precorrin-2: step 1/1. Its pathway is porphyrin-containing compound metabolism; siroheme biosynthesis; precorrin-2 from uroporphyrinogen III: step 1/1. It functions in the pathway porphyrin-containing compound metabolism; siroheme biosynthesis; siroheme from sirohydrochlorin: step 1/1. The protein operates within porphyrin-containing compound metabolism; siroheme biosynthesis; sirohydrochlorin from precorrin-2: step 1/1. Multifunctional enzyme that catalyzes the SAM-dependent methylations of uroporphyrinogen III at position C-2 and C-7 to form precorrin-2 via precorrin-1. Then it catalyzes the NAD-dependent ring dehydrogenation of precorrin-2 to yield sirohydrochlorin. Finally, it catalyzes the ferrochelation of sirohydrochlorin to yield siroheme. This Gluconobacter oxydans (strain 621H) (Gluconobacter suboxydans) protein is Siroheme synthase.